The sequence spans 425 residues: Glutamate-1-semialdehyde 2,1-aminomutase (425 aa).

At K265 the chain carries N6-(pyridoxal phosphate)lysine.

The protein belongs to the class-III pyridoxal-phosphate-dependent aminotransferase family. HemL subfamily. As to quaternary structure, homodimer. It depends on pyridoxal 5'-phosphate as a cofactor.

Its subcellular location is the cytoplasm. It carries out the reaction (S)-4-amino-5-oxopentanoate = 5-aminolevulinate. Its pathway is porphyrin-containing compound metabolism; protoporphyrin-IX biosynthesis; 5-aminolevulinate from L-glutamyl-tRNA(Glu): step 2/2. The protein is Glutamate-1-semialdehyde 2,1-aminomutase of Psychromonas ingrahamii (strain DSM 17664 / CCUG 51855 / 37).